The following is a 354-amino-acid chain: Methylthioribose-1-phosphate isomerase (354 aa).

Residues 58-60, R101, and Q204 each bind substrate; that span reads RGA. The Proton donor role is filled by D245. Residue 255-256 coordinates substrate; that stretch reads NK.

It belongs to the eIF-2B alpha/beta/delta subunits family. MtnA subfamily.

The catalysed reaction is 5-(methylsulfanyl)-alpha-D-ribose 1-phosphate = 5-(methylsulfanyl)-D-ribulose 1-phosphate. The protein operates within amino-acid biosynthesis; L-methionine biosynthesis via salvage pathway; L-methionine from S-methyl-5-thio-alpha-D-ribose 1-phosphate: step 1/6. Catalyzes the interconversion of methylthioribose-1-phosphate (MTR-1-P) into methylthioribulose-1-phosphate (MTRu-1-P). This is Methylthioribose-1-phosphate isomerase from Xylella fastidiosa (strain M23).